A 228-amino-acid polypeptide reads, in one-letter code: ATP-dependent dethiobiotin synthetase BioD (228 aa).

An ATP-binding site is contributed by 12–17 (EIGKTT). Residue Thr-16 participates in Mg(2+) binding. Residue Lys-37 is part of the active site. Ser-41 is a substrate binding site. Residues Asp-54, 116–119 (EGAG), and 205–207 (PRL) contribute to the ATP site. Residues Asp-54 and Glu-116 each contribute to the Mg(2+) site.

The protein belongs to the dethiobiotin synthetase family. As to quaternary structure, homodimer. Mg(2+) serves as cofactor.

The protein resides in the cytoplasm. It catalyses the reaction (7R,8S)-7,8-diammoniononanoate + CO2 + ATP = (4R,5S)-dethiobiotin + ADP + phosphate + 3 H(+). It functions in the pathway cofactor biosynthesis; biotin biosynthesis; biotin from 7,8-diaminononanoate: step 1/2. Its function is as follows. Catalyzes a mechanistically unusual reaction, the ATP-dependent insertion of CO2 between the N7 and N8 nitrogen atoms of 7,8-diaminopelargonic acid (DAPA, also called 7,8-diammoniononanoate) to form a ureido ring. The chain is ATP-dependent dethiobiotin synthetase BioD from Pseudomonas aeruginosa (strain ATCC 15692 / DSM 22644 / CIP 104116 / JCM 14847 / LMG 12228 / 1C / PRS 101 / PAO1).